A 487-amino-acid chain; its full sequence is Sodium-coupled neutral amino acid symporter 1 (487 aa).

At M1–G74 the chain is on the cytoplasmic side. S6 is subject to Phosphoserine. T11 carries the phosphothreonine modification. A phosphoserine mark is found at S25, S28, S49, and S52. T54 carries the post-translational modification Phosphothreonine. S56 carries the phosphoserine modification. Residues M75–A97 traverse the membrane as a helical segment. Topologically, residues N98–T112 are extracellular. A helical transmembrane segment spans residues L113–V133. Over Y134–K147 the chain is Cytoplasmic. The chain crosses the membrane as a helical span at residues F148–I168. At V169 to S188 the chain is on the extracellular side. A helical membrane pass occupies residues A189–L211. At L212–G216 the chain is on the cytoplasmic side. Residues Y217–I237 form a helical membrane-spanning segment. Over Y238 to T275 the chain is Extracellular. C245 and C264 are joined by a disulfide. Residues N251 and N257 are each glycosylated (N-linked (GlcNAc...) asparagine). A helical transmembrane segment spans residues V276–Y296. Over S297–N312 the chain is Cytoplasmic. Residues I313 to F333 traverse the membrane as a helical segment. Over Y334–D350 the chain is Extracellular. The chain crosses the membrane as a helical span at residues I351 to L371. Residues F372–H393 are Cytoplasmic-facing. The chain crosses the membrane as a helical span at residues T394–M414. The Extracellular portion of the chain corresponds to K415–D416. The chain crosses the membrane as a helical span at residues I417–L437. Over Y438–R452 the chain is Cytoplasmic. A helical membrane pass occupies residues I453 to V473. The Extracellular portion of the chain corresponds to I474 to H487.

It belongs to the amino acid/polyamine transporter 2 family. In terms of processing, N-glycosylation plays an important role in the L-glutamine transport. Expressed in the cerebral cortex by pyramidal and GABAergic neurons, astrocytes and other non-neuronal cells (at protein level). Expressed in placenta, heart, lung, skeletal muscle, spleen, stomach and testis. Highly expressed in cytotrophoblast cells from term placenta.

The protein localises to the cell membrane. It carries out the reaction L-glutamine(in) + Na(+)(in) = L-glutamine(out) + Na(+)(out). It catalyses the reaction L-alanine(in) + Na(+)(in) = L-alanine(out) + Na(+)(out). The enzyme catalyses L-asparagine(in) + Na(+)(in) = L-asparagine(out) + Na(+)(out). The catalysed reaction is L-histidine(in) + Na(+)(in) = L-histidine(out) + Na(+)(out). It carries out the reaction L-serine(in) + Na(+)(in) = L-serine(out) + Na(+)(out). It catalyses the reaction L-cysteine(in) + Na(+)(in) = L-cysteine(out) + Na(+)(out). The enzyme catalyses L-methionine(in) + Na(+)(in) = L-methionine(out) + Na(+)(out). The catalysed reaction is glycine(in) + Na(+)(in) = glycine(out) + Na(+)(out). It carries out the reaction L-threonine(in) + Na(+)(in) = L-threonine(out) + Na(+)(out). It catalyses the reaction L-proline(in) + Na(+)(in) = L-proline(out) + Na(+)(out). Its activity is regulated as follows. Inhibited by alpha-(methylamino)isobutyric acid (MeAIB). Inhibited by lithium, potassium, choline ions, N-methylglucamine. The pH dependence has an allosteric effect on the transport. Functionally, symporter that cotransports short-chain neutral amino acids and sodium ions from the extraccellular to the intracellular side of the cell membrane. The transport is elctrogenic, pH dependent and driven by the Na(+) electrochemical gradient. Participates in the astroglia-derived glutamine transport into GABAergic interneurons for neurotransmitter GABA de novo synthesis. May also contributes to amino acid transport in placental trophoblasts. Also regulates synaptic plasticity. In Homo sapiens (Human), this protein is Sodium-coupled neutral amino acid symporter 1 (SLC38A1).